A 71-amino-acid polypeptide reads, in one-letter code: Long neurotoxin 2 (71 aa).

5 disulfides stabilise this stretch: Cys-3/Cys-20, Cys-14/Cys-41, Cys-26/Cys-30, Cys-45/Cys-56, and Cys-57/Cys-62.

This sequence belongs to the three-finger toxin family. Long-chain subfamily. Type II alpha-neurotoxin sub-subfamily. In terms of tissue distribution, expressed by the venom gland.

It localises to the secreted. Binds with high affinity to muscular (alpha-1/CHRNA1) and neuronal (alpha-7/CHRNA7) nicotinic acetylcholine receptor (nAChR) and inhibits acetylcholine from binding to the receptor, thereby impairing neuromuscular and neuronal transmission. This chain is Long neurotoxin 2, found in Naja naja (Indian cobra).